The sequence spans 218 residues: Sec-independent protein translocase protein TatB (218 aa).

Residues 1–21 form a helical membrane-spanning segment; the sequence is MFDIGFSELLLVLVIGLVVLG. 2 disordered regions span residues 126–145 and 174–218; these read AESATKAQASPQAPATDVDK and SSVD…GGDR. A compositionally biased stretch (basic and acidic residues) spans 199-218; that stretch reads HSTDSHGADQPRTHQPGGDR.

It belongs to the TatB family. In terms of assembly, the Tat system comprises two distinct complexes: a TatABC complex, containing multiple copies of TatA, TatB and TatC subunits, and a separate TatA complex, containing only TatA subunits. Substrates initially bind to the TatABC complex, which probably triggers association of the separate TatA complex to form the active translocon.

Its subcellular location is the cell inner membrane. In terms of biological role, part of the twin-arginine translocation (Tat) system that transports large folded proteins containing a characteristic twin-arginine motif in their signal peptide across membranes. Together with TatC, TatB is part of a receptor directly interacting with Tat signal peptides. TatB may form an oligomeric binding site that transiently accommodates folded Tat precursor proteins before their translocation. In Yersinia enterocolitica serotype O:8 / biotype 1B (strain NCTC 13174 / 8081), this protein is Sec-independent protein translocase protein TatB.